We begin with the raw amino-acid sequence, 511 residues long: Bifunctional purine biosynthesis protein PurH (511 aa).

Residues 1-146 (MARLALLSVS…KNFAHTTVLT (146 aa)) enclose the MGS-like domain.

This sequence belongs to the PurH family.

It carries out the reaction (6R)-10-formyltetrahydrofolate + 5-amino-1-(5-phospho-beta-D-ribosyl)imidazole-4-carboxamide = 5-formamido-1-(5-phospho-D-ribosyl)imidazole-4-carboxamide + (6S)-5,6,7,8-tetrahydrofolate. The enzyme catalyses IMP + H2O = 5-formamido-1-(5-phospho-D-ribosyl)imidazole-4-carboxamide. The protein operates within purine metabolism; IMP biosynthesis via de novo pathway; 5-formamido-1-(5-phospho-D-ribosyl)imidazole-4-carboxamide from 5-amino-1-(5-phospho-D-ribosyl)imidazole-4-carboxamide (10-formyl THF route): step 1/1. It functions in the pathway purine metabolism; IMP biosynthesis via de novo pathway; IMP from 5-formamido-1-(5-phospho-D-ribosyl)imidazole-4-carboxamide: step 1/1. This chain is Bifunctional purine biosynthesis protein PurH, found in Synechocystis sp. (strain ATCC 27184 / PCC 6803 / Kazusa).